We begin with the raw amino-acid sequence, 290 residues long: ATP synthase gamma chain (290 aa).

Belongs to the ATPase gamma chain family. As to quaternary structure, F-type ATPases have 2 components, CF(1) - the catalytic core - and CF(0) - the membrane proton channel. CF(1) has five subunits: alpha(3), beta(3), gamma(1), delta(1), epsilon(1). CF(0) has three main subunits: a, b and c.

The protein resides in the cell inner membrane. Produces ATP from ADP in the presence of a proton gradient across the membrane. The gamma chain is believed to be important in regulating ATPase activity and the flow of protons through the CF(0) complex. The polypeptide is ATP synthase gamma chain (Anaeromyxobacter sp. (strain K)).